Consider the following 103-residue polypeptide: MIVTTTSGIQGKEIIEYIDIVNGEAIMGANIVRDLFASVRDVVGGRAGAYESKLKDARDIAMDEMKELAKQKGANAIIGIDVDYEVVRDGMLMVAVSGTAVRI.

The protein belongs to the UPF0145 family.

The sequence is that of UPF0145 protein BC_1816 from Bacillus cereus (strain ATCC 14579 / DSM 31 / CCUG 7414 / JCM 2152 / NBRC 15305 / NCIMB 9373 / NCTC 2599 / NRRL B-3711).